A 543-amino-acid polypeptide reads, in one-letter code: Carboxypeptidase Y homolog A (543 aa).

An N-terminal signal peptide occupies residues 1–17 (MKFLTTGLLATAALAAA). The propeptide occupies 18-124 (QEQQVLQAED…KLHNYDLRVK (107 aa)). 5 cysteine pairs are disulfide-bonded: cysteine 179/cysteine 419, cysteine 313/cysteine 327, cysteine 337/cysteine 360, cysteine 344/cysteine 353, and cysteine 382/cysteine 389. Residue asparagine 210 is glycosylated (N-linked (GlcNAc...) asparagine). Residue serine 266 is part of the active site. The active site involves aspartate 458. The N-linked (GlcNAc...) asparagine glycan is linked to asparagine 509. Residue histidine 520 is part of the active site.

This sequence belongs to the peptidase S10 family.

It is found in the vacuole. It catalyses the reaction Release of a C-terminal amino acid with broad specificity.. Its function is as follows. Vacuolar carboxypeptidase involved in degradation of small peptides. Digests preferentially peptides containing an aliphatic or hydrophobic residue in P1' position, as well as methionine, leucine or phenylalanine in P1 position of ester substrate. This is Carboxypeptidase Y homolog A (CPYA) from Trichophyton equinum (Horse ringworm fungus).